The primary structure comprises 191 residues: MRPIILASASPRRQELLKNLGLEFEVQVSDVDENLEENISSGQLVEKLAERKAAAVALIRTQGLVIGADTIVVLGDKPLGKPTNREEAVQMLSNLQGKSHEVFTGLAVIDASTGQRVVTHQVTEVNFKTLTKDQIERYVDTGEPMDKAGGYAVQGLASIFIDSIRGCYFSVVGLPISKLADALRMFGVEIV.

Residue Asp69 is the Proton acceptor of the active site.

This sequence belongs to the Maf family. YhdE subfamily. A divalent metal cation serves as cofactor.

The protein localises to the cytoplasm. The catalysed reaction is dTTP + H2O = dTMP + diphosphate + H(+). It carries out the reaction UTP + H2O = UMP + diphosphate + H(+). Its function is as follows. Nucleoside triphosphate pyrophosphatase that hydrolyzes dTTP and UTP. May have a dual role in cell division arrest and in preventing the incorporation of modified nucleotides into cellular nucleic acids. This Desulforamulus reducens (strain ATCC BAA-1160 / DSM 100696 / MI-1) (Desulfotomaculum reducens) protein is dTTP/UTP pyrophosphatase.